The following is a 544-amino-acid chain: CTP synthase (544 aa).

An amidoligase domain region spans residues 1 to 265 (MTKFIFVTGG…DNIITEQLQL (265 aa)). Residue Ser-13 participates in CTP binding. Position 13 (Ser-13) interacts with UTP. ATP-binding positions include 14–19 (SLGKGI) and Asp-71. Mg(2+) is bound by residues Asp-71 and Glu-139. CTP contacts are provided by residues 146–148 (DIE), 186–191 (KTKPTQ), and Lys-222. UTP is bound by residues 186 to 191 (KTKPTQ) and Lys-222. In terms of domain architecture, Glutamine amidotransferase type-1 spans 290-544 (KIAMVGKYVD…VKAALNNKKA (255 aa)). Position 353 (Gly-353) interacts with L-glutamine. Residue Cys-380 is the Nucleophile; for glutamine hydrolysis of the active site. L-glutamine-binding positions include 381–384 (LGMQ), Glu-404, and Arg-471. Residues His-517 and Glu-519 contribute to the active site.

It belongs to the CTP synthase family. As to quaternary structure, homotetramer.

The catalysed reaction is UTP + L-glutamine + ATP + H2O = CTP + L-glutamate + ADP + phosphate + 2 H(+). It catalyses the reaction L-glutamine + H2O = L-glutamate + NH4(+). It carries out the reaction UTP + NH4(+) + ATP = CTP + ADP + phosphate + 2 H(+). It participates in pyrimidine metabolism; CTP biosynthesis via de novo pathway; CTP from UDP: step 2/2. With respect to regulation, allosterically activated by GTP, when glutamine is the substrate; GTP has no effect on the reaction when ammonia is the substrate. The allosteric effector GTP functions by stabilizing the protein conformation that binds the tetrahedral intermediate(s) formed during glutamine hydrolysis. Inhibited by the product CTP, via allosteric rather than competitive inhibition. Its function is as follows. Catalyzes the ATP-dependent amination of UTP to CTP with either L-glutamine or ammonia as the source of nitrogen. Regulates intracellular CTP levels through interactions with the four ribonucleotide triphosphates. The chain is CTP synthase from Neisseria meningitidis serogroup C (strain 053442).